The following is a 246-amino-acid chain: UL16-binding protein 2 (246 aa).

A signal peptide spans Met1 to Ala25. Positions Asp29–Glu117 are MHC class I alpha-1 like. Cys50 and Cys66 are oxidised to a cystine. 2 N-linked (GlcNAc...) asparagine glycosylation sites follow: Asn68 and Asn82. The tract at residues Pro118–Gly210 is MHC class I alpha-2 like. Cys127 and Cys190 form a disulfide bridge. Ser216 serves as a coordination point for a protein. Residue Ser217 is the site of GPI-anchor amidated serine attachment. A propeptide spans Gly218–Ile246 (removed in mature form).

The protein belongs to the MHC class I family. Interacts with KLRK1/NKG2D. Does not bind to beta2-microglobulin. In terms of assembly, (Microbial infection) In CMV-infected cells, interacts with the viral glycoprotein UL16; this interaction causes ULBP2 retention in the endoplasmic reticulum and cis-Golgi and prevents binding to and activation of KLRK1/NKG2D, providing CMV with an immune evasion mechanism. In terms of tissue distribution, expressed in various types of cancer cell lines and in the fetus, but not in normal tissues.

It is found in the cell membrane. The protein resides in the endoplasmic reticulum. The protein localises to the secreted. Functionally, binds and activates the KLRK1/NKG2D receptor, mediating natural killer cell cytotoxicity. The chain is UL16-binding protein 2 from Homo sapiens (Human).